The following is a 169-amino-acid chain: NADH-quinone oxidoreductase subunit B (169 aa).

The [4Fe-4S] cluster site is built by Cys-42, Cys-43, Cys-107, and Cys-136.

It belongs to the complex I 20 kDa subunit family. As to quaternary structure, NDH-1 is composed of 14 different subunits. Subunits NuoB, C, D, E, F, and G constitute the peripheral sector of the complex. Requires [4Fe-4S] cluster as cofactor.

The protein resides in the cell inner membrane. The catalysed reaction is a quinone + NADH + 5 H(+)(in) = a quinol + NAD(+) + 4 H(+)(out). In terms of biological role, NDH-1 shuttles electrons from NADH, via FMN and iron-sulfur (Fe-S) centers, to quinones in the respiratory chain. The immediate electron acceptor for the enzyme in this species is believed to be ubiquinone. Couples the redox reaction to proton translocation (for every two electrons transferred, four hydrogen ions are translocated across the cytoplasmic membrane), and thus conserves the redox energy in a proton gradient. This is NADH-quinone oxidoreductase subunit B from Helicobacter hepaticus (strain ATCC 51449 / 3B1).